We begin with the raw amino-acid sequence, 166 residues long: Cyclin-dependent kinase 4 inhibitor D (166 aa).

Met1 is modified (N-acetylmethionine). ANK repeat units lie at residues 41-69 (FGKT…SPNV), 73-102 (SGTS…DVNA), 106-135 (TGSL…LHHR), and 138-165 (SGLT…MMIP).

Belongs to the CDKN2 cyclin-dependent kinase inhibitor family. In terms of assembly, interacts with CDK6.

It is found in the nucleus. The protein localises to the cytoplasm. Interacts strongly with CDK4 and CDK6 and inhibits them. The sequence is that of Cyclin-dependent kinase 4 inhibitor D (Cdkn2d) from Mus musculus (Mouse).